A 68-amino-acid chain; its full sequence is UPF0291 protein TTE2340 (68 aa).

The protein belongs to the UPF0291 family.

Its subcellular location is the cytoplasm. The chain is UPF0291 protein TTE2340 from Caldanaerobacter subterraneus subsp. tengcongensis (strain DSM 15242 / JCM 11007 / NBRC 100824 / MB4) (Thermoanaerobacter tengcongensis).